Reading from the N-terminus, the 304-residue chain is Ribonuclease Z (304 aa).

Zn(2+) is bound by residues His-63, His-65, Asp-67, His-68, His-143, Asp-213, and His-271. Asp-67 functions as the Proton acceptor in the catalytic mechanism.

This sequence belongs to the RNase Z family. As to quaternary structure, homodimer. The cofactor is Zn(2+).

The catalysed reaction is Endonucleolytic cleavage of RNA, removing extra 3' nucleotides from tRNA precursor, generating 3' termini of tRNAs. A 3'-hydroxy group is left at the tRNA terminus and a 5'-phosphoryl group is left at the trailer molecule.. Zinc phosphodiesterase, which displays some tRNA 3'-processing endonuclease activity. Probably involved in tRNA maturation, by removing a 3'-trailer from precursor tRNA. This Parabacteroides distasonis (strain ATCC 8503 / DSM 20701 / CIP 104284 / JCM 5825 / NCTC 11152) protein is Ribonuclease Z.